The following is a 248-amino-acid chain: Tryptophan synthase alpha chain (248 aa).

Catalysis depends on proton acceptor residues E36 and D47.

The protein belongs to the TrpA family. Tetramer of two alpha and two beta chains.

The enzyme catalyses (1S,2R)-1-C-(indol-3-yl)glycerol 3-phosphate + L-serine = D-glyceraldehyde 3-phosphate + L-tryptophan + H2O. The protein operates within amino-acid biosynthesis; L-tryptophan biosynthesis; L-tryptophan from chorismate: step 5/5. The alpha subunit is responsible for the aldol cleavage of indoleglycerol phosphate to indole and glyceraldehyde 3-phosphate. The sequence is that of Tryptophan synthase alpha chain from Archaeoglobus fulgidus (strain ATCC 49558 / DSM 4304 / JCM 9628 / NBRC 100126 / VC-16).